An 817-amino-acid polypeptide reads, in one-letter code: Lon protease 1 (817 aa).

The 199-residue stretch at 18 to 216 (VPLLPLRDII…KLYELMQGEI (199 aa)) folds into the Lon N-terminal domain. An ATP-binding site is contributed by 368–375 (GPPGVGKT). The 182-residue stretch at 604–785 (EDQVGIVTGL…DDVLREALVL (182 aa)) folds into the Lon proteolytic domain. Catalysis depends on residues Ser691 and Lys734. Residues 789–817 (EEFGRKPTTDGGKLGGTTELPASPAVAPA) form a disordered region.

This sequence belongs to the peptidase S16 family. In terms of assembly, homohexamer. Organized in a ring with a central cavity.

It is found in the cytoplasm. It catalyses the reaction Hydrolysis of proteins in presence of ATP.. Its function is as follows. ATP-dependent serine protease that mediates the selective degradation of mutant and abnormal proteins as well as certain short-lived regulatory proteins. Required for cellular homeostasis and for survival from DNA damage and developmental changes induced by stress. Degrades polypeptides processively to yield small peptide fragments that are 5 to 10 amino acids long. Binds to DNA in a double-stranded, site-specific manner. The sequence is that of Lon protease 1 from Myxococcus xanthus.